The primary structure comprises 939 residues: Trafficking kinesin-binding protein 1 (939 aa).

Positions 46-353 (LEEQLPHYKL…EELKNLRNKT (308 aa)) constitute an HAP1 N-terminal domain. Residues 106–354 (KTYNDIDAVT…ELKNLRNKTM (249 aa)) adopt a coiled-coil conformation. The tract at residues 359 to 509 (RYHSLGLFPM…SLRRENYLSE (151 aa)) is interaction with HGS. The O-linked (GlcNAc) serine glycan is linked to serine 444. The segment at 472–492 (LGNEDHNKKPGTPGTPGSHDL) is disordered. A coiled-coil region spans residues 490–524 (HDLETALRRLSLRRENYLSERRFFEEEQERKLREL). Serine 534 carries the phosphoserine modification. The segment at 655 to 669 (PGKCMSQTNSTFTFT) is interaction with OGT. Serine 677 and serine 716 each carry an O-linked (GlcNAc) serine glycan. Phosphoserine occurs at positions 716 and 905.

This sequence belongs to the milton family. In terms of assembly, interacts with RHOT1 and RHOT2. Found in a complex with KIF5B, OGT, RHOT1 and RHOT2. Interacts with HGS. Interacts with GABRA1. Interacts with KIF5C. Interacts with OGT; stable interaction is not required for glycosylation of this protein by OGT. Isoform 1 interacts with OGT. Post-translationally, O-glycosylated. Glycosylated by OGT; glycosylation in response to increased extracellular glucose levels is required for and leads to regulation of mitochondrial motility by OGT. In terms of tissue distribution, widely expressed with the greatest expression in brain, liver and kidney. Detected throughout the CNS, including the cortex, hippocamps, thalamus and various subcortical nuclei of the forebrain and midbrain, the granule of Purkinje layers of the cerebellum and the gray matter of the spinal cord. High level detected in lower moter neurons (at protein level).

Its subcellular location is the cytoplasm. The protein localises to the nucleus. It is found in the mitochondrion. It localises to the early endosome. The protein resides in the endosome. Its subcellular location is the mitochondrion membrane. The protein localises to the cell cortex. Its function is as follows. Involved in the regulation of endosome-to-lysosome trafficking, including endocytic trafficking of EGF-EGFR complexes and GABA-A receptors. Involved in mitochondrial motility. When O-glycosylated, abolishes mitochondrial motility. Crucial for recruiting OGT to the mitochondrial surface of neuronal processes. TRAK1 and RHOT form an essential protein complex that links KIF5 to mitochondria for light chain-independent, anterograde transport of mitochondria. This Mus musculus (Mouse) protein is Trafficking kinesin-binding protein 1 (Trak1).